The primary structure comprises 431 residues: Reticulon-like protein B17 (431 aa).

Disordered regions lie at residues 1-110 (MEST…SEAV) and 126-152 (PPRK…SSSD). Positions 12-26 (TKSASRLQDSSNPPN) are enriched in polar residues. Residues 126-138 (PPRKRKTNGRPKK) show a composition bias toward basic residues. The segment covering 142 to 152 (SSAPPLCSSSD) has biased composition (polar residues). A Reticulon domain is found at 168–355 (ISDLVMWRDV…VTAFWNLTSI (188 aa)). A run of 4 helical transmembrane segments spans residues 177–197 (VAKS…SCFA), 202–222 (FSVF…SFLS), 286–306 (YGHL…SFTI), and 349–369 (FWNL…LVIF). Residues 382–415 (EVEPVENEQEEETLPQEEETVPQEEETVPQEEEQ) show a composition bias toward acidic residues. Residues 382–422 (EVEPVENEQEEETLPQEEETVPQEEETVPQEEEQTQPSEER) form a disordered region.

Its subcellular location is the endoplasmic reticulum membrane. In Arabidopsis thaliana (Mouse-ear cress), this protein is Reticulon-like protein B17 (RTNLB17).